Here is a 71-residue protein sequence, read N- to C-terminus: Disintegrin viridin (71 aa).

A Disintegrin domain is found at 1–71 (AGEECDCGSP…SADCPRNRFH (71 aa)). Disulfide bonds link C5-C20, C7-C15, C14-C37, C28-C34, C33-C58, and C46-C65. The Cell attachment site signature appears at 50–52 (RGD). The interval 50-71 (RGDNPDDRCTGQSADCPRNRFH) is disordered.

The protein belongs to the venom metalloproteinase (M12B) family. P-II subfamily. P-IIa sub-subfamily. Monomer (disintegrin). In terms of tissue distribution, expressed by the venom gland.

The protein localises to the secreted. Its function is as follows. Inhibits fibrinogen interaction with platelets. Acts by binding to alpha-IIb/beta-3 (ITGA2B/ITGB3) on the platelet surface and inhibits aggregation induced by ADP, thrombin, platelet-activating factor and collagen. This chain is Disintegrin viridin, found in Crotalus viridis viridis (Prairie rattlesnake).